We begin with the raw amino-acid sequence, 119 residues long: Large ribosomal subunit protein bL19 (119 aa).

It belongs to the bacterial ribosomal protein bL19 family.

This protein is located at the 30S-50S ribosomal subunit interface and may play a role in the structure and function of the aminoacyl-tRNA binding site. The sequence is that of Large ribosomal subunit protein bL19 from Idiomarina loihiensis (strain ATCC BAA-735 / DSM 15497 / L2-TR).